Consider the following 128-residue polypeptide: Small ribosomal subunit protein uS12 (128 aa).

The disordered stretch occupies residues 1 to 30; that stretch reads MPTINQLIRKGREPKERKSKSPALMGNPQK. Asp89 is modified (3-methylthioaspartic acid). The disordered stretch occupies residues 106 to 128; that stretch reads GVEGRKQGRSKYGTKRPKEGGKK.

Belongs to the universal ribosomal protein uS12 family. As to quaternary structure, part of the 30S ribosomal subunit. Contacts proteins S8 and S17. May interact with IF1 in the 30S initiation complex.

In terms of biological role, with S4 and S5 plays an important role in translational accuracy. Functionally, interacts with and stabilizes bases of the 16S rRNA that are involved in tRNA selection in the A site and with the mRNA backbone. Located at the interface of the 30S and 50S subunits, it traverses the body of the 30S subunit contacting proteins on the other side and probably holding the rRNA structure together. The combined cluster of proteins S8, S12 and S17 appears to hold together the shoulder and platform of the 30S subunit. The chain is Small ribosomal subunit protein uS12 from Dictyoglomus thermophilum (strain ATCC 35947 / DSM 3960 / H-6-12).